Here is a 280-residue protein sequence, read N- to C-terminus: Polyamine aminopropyltransferase (280 aa).

The 235-residue stretch at 3 to 237 (DVYFMERDPY…YWWSFSVGSK (235 aa)) folds into the PABS domain. S-methyl-5'-thioadenosine is bound at residue Gln33. Spermidine is bound by residues His64 and Asp88. S-methyl-5'-thioadenosine-binding positions include Asp108 and 139–140 (DG). The active-site Proton acceptor is Asp157. 157–160 (DSTD) is a binding site for spermidine.

This sequence belongs to the spermidine/spermine synthase family. In terms of assembly, homodimer or homotetramer.

It localises to the cytoplasm. The enzyme catalyses S-adenosyl 3-(methylsulfanyl)propylamine + putrescine = S-methyl-5'-thioadenosine + spermidine + H(+). Its pathway is amine and polyamine biosynthesis; spermidine biosynthesis; spermidine from putrescine: step 1/1. Functionally, catalyzes the irreversible transfer of a propylamine group from the amino donor S-adenosylmethioninamine (decarboxy-AdoMet) to putrescine (1,4-diaminobutane) to yield spermidine. This is Polyamine aminopropyltransferase from Hydrogenobaculum sp. (strain Y04AAS1).